We begin with the raw amino-acid sequence, 84 residues long: MKLLYLFLAILLAIEEPVISGKRHILRCMGNSGICRASCKKNEQPYLYCRNYQSCCLQSYMRISISGKEEDTDWSYEKQWPRLP.

The N-terminal stretch at 1–21 (MKLLYLFLAILLAIEEPVISG) is a signal peptide. 3 disulfides stabilise this stretch: Cys28–Cys55, Cys35–Cys49, and Cys39–Cys56.

Belongs to the beta-defensin family.

The protein localises to the secreted. Has antibacterial activity. This chain is Beta-defensin 119 (DEFB119), found in Gorilla gorilla gorilla (Western lowland gorilla).